A 480-amino-acid polypeptide reads, in one-letter code: Aspartyl/glutamyl-tRNA(Asn/Gln) amidotransferase subunit B (480 aa).

The protein belongs to the GatB/GatE family. GatB subfamily. As to quaternary structure, heterotrimer of A, B and C subunits.

It carries out the reaction L-glutamyl-tRNA(Gln) + L-glutamine + ATP + H2O = L-glutaminyl-tRNA(Gln) + L-glutamate + ADP + phosphate + H(+). The enzyme catalyses L-aspartyl-tRNA(Asn) + L-glutamine + ATP + H2O = L-asparaginyl-tRNA(Asn) + L-glutamate + ADP + phosphate + 2 H(+). Functionally, allows the formation of correctly charged Asn-tRNA(Asn) or Gln-tRNA(Gln) through the transamidation of misacylated Asp-tRNA(Asn) or Glu-tRNA(Gln) in organisms which lack either or both of asparaginyl-tRNA or glutaminyl-tRNA synthetases. The reaction takes place in the presence of glutamine and ATP through an activated phospho-Asp-tRNA(Asn) or phospho-Glu-tRNA(Gln). The chain is Aspartyl/glutamyl-tRNA(Asn/Gln) amidotransferase subunit B from Hahella chejuensis (strain KCTC 2396).